The sequence spans 872 residues: MQPTNPNQFTEKAWEAIAHTPEIAKQHQQQQIESEHLMKALLEQDGLASGILTKAGVNLQKISDRTEQYIQRQPKVSGNSTSVYLGRSLDTLLDRAEAHRKDFQDEYISIEHLLLAYPKDDRFGKGLFQEFALDESKLKNIIKQVRGSQTVTDQNPEGKYQSLEKYGRDLTEAARKGQLDPVIGRDDEIRRTIQILSRRTKNNPVLIGEPGVGKTAIAEGLAQRIVAGDVPQSLKDRKLISLDMGAMIAGAKFRGEFEERLKAVLKEVTESGGNIVLFIDEIHTVVGAGATQGAMDAGNLLKPMLARGELRCIGATTLDEYRKYIEKDAALERRFQQVYVDQPSVEDTISILRGLKERYEVHHGVKISDSSLVAAATLSSRYISDRFLPDKAIDLVDEAAARLKMEITSKPEELDEIDRKILQLEMEKLSLQKESDAASRERLERLEKELADLKEEQRTLNTQWQSEKDVINKLQSVKEEIDKVNLEIQQAERNYDLNRAAELKYGNLTDLHRRLEATERELSQTQGTGKSLLREEVTEADIAEIISKWTGIPISKLVESEKEKLLHLEDELHHRVIGQDEAVTAVADAIQRSRAGLADPNRPTASFVFLGPTGVGKTELAKALASYMFDTEDALVRIDMSEYMEKHAVSRLIGAPPGYVGYEEGGQLTETIRRRPYAVILFDEIEKAHPDVFNIFLQILDDGRVTDAQGHTVDFKNTIIIMTSNIGSQYILDIAGDNSRYDEMRHRVMEAMRNSFRPEFLNRIDEVIIFHSLDKKELRQIVQLQVERLKARLDDRKISLRLSDVALDFLAEVGYDPVFGARPLKRAIQRELETQIAKAILRGEFNDGDTIFVDVQNERLSFSRLPVEVFSS.

The 143-residue stretch at 6–148 (PNQFTEKAWE…KNIIKQVRGS (143 aa)) folds into the Clp R domain. 2 repeat regions span residues 9–73 (FTEK…IQRQ) and 85–148 (LGRS…VRGS). The NBD1 stretch occupies residues 161–342 (QSLEKYGRDL…RRFQQVYVDQ (182 aa)). Position 208-215 (208-215 (GEPGVGKT)) interacts with ATP. Residues 343–551 (PSVEDTISIL…IAEIISKWTG (209 aa)) are linker. Residues 393–527 (IDLVDEAAAR…TERELSQTQG (135 aa)) are a coiled coil. The tract at residues 561-772 (EKEKLLHLED…RIDEVIIFHS (212 aa)) is NBD2. 611–618 (GPTGVGKT) serves as a coordination point for ATP. The C-terminal stretch occupies residues 773–872 (LDKKELRQIV…SRLPVEVFSS (100 aa)).

The protein belongs to the ClpA/ClpB family. Homohexamer. The oligomerization is ATP-dependent.

It localises to the cytoplasm. In terms of biological role, part of a stress-induced multi-chaperone system, it is involved in the recovery of the cell from heat-induced damage, in cooperation with DnaK, DnaJ and GrpE. Acts before DnaK, in the processing of protein aggregates. Protein binding stimulates the ATPase activity; ATP hydrolysis unfolds the denatured protein aggregates, which probably helps expose new hydrophobic binding sites on the surface of ClpB-bound aggregates, contributing to the solubilization and refolding of denatured protein aggregates by DnaK. In Nostoc sp. (strain PCC 7120 / SAG 25.82 / UTEX 2576), this protein is Chaperone protein ClpB 2 (clpB2).